The chain runs to 334 residues: Glyceraldehyde-3-phosphate dehydrogenase (334 aa).

NAD(+)-binding positions include 12–13 (TI) and G111. D-glyceraldehyde 3-phosphate is bound at residue 140–142 (SCN). Catalysis depends on C141, which acts as the Nucleophile. R167 is a binding site for NAD(+). Residue 192–193 (HG) participates in D-glyceraldehyde 3-phosphate binding. Q298 contacts NAD(+).

This sequence belongs to the glyceraldehyde-3-phosphate dehydrogenase family. In terms of assembly, homotetramer.

Its subcellular location is the cytoplasm. The catalysed reaction is D-glyceraldehyde 3-phosphate + phosphate + NADP(+) = (2R)-3-phospho-glyceroyl phosphate + NADPH + H(+). It carries out the reaction D-glyceraldehyde 3-phosphate + phosphate + NAD(+) = (2R)-3-phospho-glyceroyl phosphate + NADH + H(+). Its pathway is carbohydrate degradation; glycolysis; pyruvate from D-glyceraldehyde 3-phosphate: step 1/5. This is Glyceraldehyde-3-phosphate dehydrogenase (gap) from Pyrococcus abyssi (strain GE5 / Orsay).